The following is a 306-amino-acid chain: Ornithine carbamoyltransferase (306 aa).

Residues 46–49 (STRT), Gln73, Arg97, and 124–127 (HPTQ) each bind carbamoyl phosphate. L-ornithine-binding positions include Asn156, Asp220, and 224–225 (SM). Carbamoyl phosphate-binding positions include 260 to 261 (CL) and Arg288.

Belongs to the aspartate/ornithine carbamoyltransferase superfamily. OTCase family.

Its subcellular location is the cytoplasm. The enzyme catalyses carbamoyl phosphate + L-ornithine = L-citrulline + phosphate + H(+). It participates in amino-acid biosynthesis; L-arginine biosynthesis; L-arginine from L-ornithine and carbamoyl phosphate: step 1/3. In terms of biological role, reversibly catalyzes the transfer of the carbamoyl group from carbamoyl phosphate (CP) to the N(epsilon) atom of ornithine (ORN) to produce L-citrulline. The polypeptide is Ornithine carbamoyltransferase (Campylobacter jejuni subsp. jejuni serotype O:23/36 (strain 81-176)).